The chain runs to 105 residues: Large ribosomal subunit protein bL21 (105 aa).

This sequence belongs to the bacterial ribosomal protein bL21 family. As to quaternary structure, part of the 50S ribosomal subunit. Contacts protein L20.

This protein binds to 23S rRNA in the presence of protein L20. In Bacteroides fragilis (strain YCH46), this protein is Large ribosomal subunit protein bL21.